A 1226-amino-acid chain; its full sequence is DNA-directed RNA polymerase subunit beta'' (1226 aa).

C223, C297, C304, and C307 together coordinate Zn(2+).

This sequence belongs to the RNA polymerase beta' chain family. RpoC2 subfamily. As to quaternary structure, in plastids the minimal PEP RNA polymerase catalytic core is composed of four subunits: alpha, beta, beta', and beta''. When a (nuclear-encoded) sigma factor is associated with the core the holoenzyme is formed, which can initiate transcription. The cofactor is Zn(2+).

The protein resides in the plastid. It is found in the chloroplast. It carries out the reaction RNA(n) + a ribonucleoside 5'-triphosphate = RNA(n+1) + diphosphate. DNA-dependent RNA polymerase catalyzes the transcription of DNA into RNA using the four ribonucleoside triphosphates as substrates. The protein is DNA-directed RNA polymerase subunit beta'' of Pyropia yezoensis (Susabi-nori).